Reading from the N-terminus, the 398-residue chain is Histidinol-phosphate aminotransferase (398 aa).

A compositionally biased stretch (polar residues) spans Met1–Pro10. The disordered stretch occupies residues Met1–Pro30. An N6-(pyridoxal phosphate)lysine modification is found at Lys234.

This sequence belongs to the class-II pyridoxal-phosphate-dependent aminotransferase family. Histidinol-phosphate aminotransferase subfamily. In terms of assembly, homodimer. Pyridoxal 5'-phosphate is required as a cofactor.

The catalysed reaction is L-histidinol phosphate + 2-oxoglutarate = 3-(imidazol-4-yl)-2-oxopropyl phosphate + L-glutamate. Its pathway is amino-acid biosynthesis; L-histidine biosynthesis; L-histidine from 5-phospho-alpha-D-ribose 1-diphosphate: step 7/9. This is Histidinol-phosphate aminotransferase from Mycolicibacterium paratuberculosis (strain ATCC BAA-968 / K-10) (Mycobacterium paratuberculosis).